A 186-amino-acid polypeptide reads, in one-letter code: Large ribosomal subunit protein uL10 (186 aa).

It belongs to the universal ribosomal protein uL10 family. As to quaternary structure, part of the ribosomal stalk of the 50S ribosomal subunit. The N-terminus interacts with L11 and the large rRNA to form the base of the stalk. The C-terminus forms an elongated spine to which L12 dimers bind in a sequential fashion forming a multimeric L10(L12)X complex.

Forms part of the ribosomal stalk, playing a central role in the interaction of the ribosome with GTP-bound translation factors. The polypeptide is Large ribosomal subunit protein uL10 (rplJ) (Streptomyces virginiae (Streptomyces cinnamonensis)).